The chain runs to 148 residues: MAPKGEKKPAEKKPAEEKKSTVAEKAPAEKKPKAGKKLPKEGGSAAGEKKKKRSKKSVETYKIYIFKVLKQVHPDIGISSKAMGIMNSFINDIFEKLTQESSRLARYNKKPTITSREIQTAVRLVLPGELAKHDVSEGTKAVTKFTSS.

A compositionally biased stretch (basic and acidic residues) spans 1-32 (MAPKGEKKPAEKKPAEEKKSTVAEKAPAEKKP). A disordered region spans residues 1–57 (MAPKGEKKPAEKKPAEEKKSTVAEKAPAEKKPKAGKKLPKEGGSAAGEKKKKRSKKS). Residues Lys-7, Lys-36, and Lys-37 each carry the N6-acetyllysine modification. Lys-144 is covalently cross-linked (Glycyl lysine isopeptide (Lys-Gly) (interchain with G-Cter in ubiquitin)).

This sequence belongs to the histone H2B family. The nucleosome is a histone octamer containing two molecules each of H2A, H2B, H3 and H4 assembled in one H3-H4 heterotetramer and two H2A-H2B heterodimers. The octamer wraps approximately 147 bp of DNA. In terms of processing, can be acetylated to form H2BK6ac, H2BK33ac and H2BK34ac. Post-translationally, monoubiquitinated to form H2BK143ub1; may give a specific tag for epigenetic transcriptional activation.

The protein localises to the nucleus. Its subcellular location is the chromosome. Core component of nucleosome. Nucleosomes wrap and compact DNA into chromatin, limiting DNA accessibility to the cellular machineries which require DNA as a template. Histones thereby play a central role in transcription regulation, DNA repair, DNA replication and chromosomal stability. DNA accessibility is regulated via a complex set of post-translational modifications of histones, also called histone code, and nucleosome remodeling. The sequence is that of Probable histone H2B.2 from Medicago truncatula (Barrel medic).